The primary structure comprises 276 residues: Large ribosomal subunit protein uL2 (276 aa).

Disordered regions lie at residues 29–55 (PEKS…RHRG) and 219–276 (HVRG…RRTR). Basic residues predominate over residues 259 to 276 (TRNKKKQSSKLIVRRRTR).

It belongs to the universal ribosomal protein uL2 family. As to quaternary structure, part of the 50S ribosomal subunit. Forms a bridge to the 30S subunit in the 70S ribosome.

Its function is as follows. One of the primary rRNA binding proteins. Required for association of the 30S and 50S subunits to form the 70S ribosome, for tRNA binding and peptide bond formation. It has been suggested to have peptidyltransferase activity; this is somewhat controversial. Makes several contacts with the 16S rRNA in the 70S ribosome. The protein is Large ribosomal subunit protein uL2 of Rippkaea orientalis (strain PCC 8801 / RF-1) (Cyanothece sp. (strain PCC 8801)).